A 198-amino-acid chain; its full sequence is Glutamyl-tRNA(Gln) amidotransferase subunit C, mitochondrial (198 aa).

This sequence belongs to the GatC family. In terms of assembly, subunit of the heterotrimeric GatCAB amidotransferase (AdT) complex, composed of A, B and C subunits.

It is found in the mitochondrion. The catalysed reaction is L-glutamyl-tRNA(Gln) + L-glutamine + ATP + H2O = L-glutaminyl-tRNA(Gln) + L-glutamate + ADP + phosphate + H(+). In terms of biological role, allows the formation of correctly charged Gln-tRNA(Gln) through the transamidation of misacylated Glu-tRNA(Gln) in the mitochondria. The reaction takes place in the presence of glutamine and ATP through an activated gamma-phospho-Glu-tRNA(Gln). This chain is Glutamyl-tRNA(Gln) amidotransferase subunit C, mitochondrial, found in Caenorhabditis remanei (Caenorhabditis vulgaris).